The following is a 72-amino-acid chain: Omega-conotoxin-like S6.6 (72 aa).

An N-terminal signal peptide occupies residues 1-22 (MKLTCVVIVAVLLLTACQLLTA). Residues 23-45 (DDSRGTQKHRALRSDTKLSMSTR) constitute a propeptide that is removed on maturation. Cystine bridges form between Cys46–Cys61, Cys53–Cys65, and Cys60–Cys71. Position 71 is a cysteine amide (Cys71).

The protein belongs to the conotoxin O1 superfamily. As to expression, expressed by the venom duct.

It is found in the secreted. In terms of biological role, omega-conotoxins act at presynaptic membranes, they bind and block voltage-gated calcium channels (Cav). This toxin blocks N-, P- and Q-type calcium channels. The protein is Omega-conotoxin-like S6.6 of Conus striatus (Striated cone).